The chain runs to 173 residues: NADH-ubiquinone oxidoreductase chain 6 (173 aa).

The next 6 helical transmembrane spans lie at 1 to 21, 27 to 47, 53 to 73, 82 to 102, 106 to 126, and 141 to 161; these read MIYF…AVAS, FAAL…VGYG, LVLF…SAAL, WGSW…LLVG, YGWW…MSVL, and GFLL…VLEI.

It belongs to the complex I subunit 6 family.

The protein resides in the mitochondrion membrane. The catalysed reaction is a ubiquinone + NADH + 5 H(+)(in) = a ubiquinol + NAD(+) + 4 H(+)(out). In terms of biological role, core subunit of the mitochondrial membrane respiratory chain NADH dehydrogenase (Complex I) that is believed to belong to the minimal assembly required for catalysis. Complex I functions in the transfer of electrons from NADH to the respiratory chain. The immediate electron acceptor for the enzyme is believed to be ubiquinone. The chain is NADH-ubiquinone oxidoreductase chain 6 (MT-ND6) from Latimeria chalumnae (Coelacanth).